A 269-amino-acid polypeptide reads, in one-letter code: Regulating synaptic membrane exocytosis protein 4 (269 aa).

A C2 domain is found at 115–233 (PMGDVEIGLQ…DLTTLAVGWY (119 aa)). 2 positions are modified to phosphoserine: S254 and S257.

Binds PPFIA3. Does not bind RAB3.

The protein localises to the synapse. In terms of biological role, regulates synaptic membrane exocytosis. The sequence is that of Regulating synaptic membrane exocytosis protein 4 (RIMS4) from Homo sapiens (Human).